A 431-amino-acid polypeptide reads, in one-letter code: MAQFYSAKRRVTTRQIITVKVNDLDSFGQGVARHNGKALFIPGLLPEESAEVIITEDKKQFARARVSRRLNDSPERETPRCPHFGVCGGCQQQHVGIDLQQRSKSAALARLMKHEVNDIIAGAPWGYRRRARLSLNCPPDKPLQMGFRKAGSSDIVNVEQCPVLAPQLAALLPRIRACLASLHGTRHLGHVELVQAGSGTLMILRHTAPLSAADKEKLERFSHSEGLSLFLAPFSEILETVSGEAPWYDSHGLRLAFSPRDFIQVNEAVNQQMVARALEWLDVRAEDRVLDLFCGMGNFTLPLATRAASVVGVEGVPALVEKGRENAIRNGLHNVTFFHENLEEDVTKQPWAKNGFDKVLLDPARAGATGVMRHIIKLKPIRIVYVSCNPATLARDSEALVNAGYEVTRLAMLDMFPHTGHLESMVLFERM.

Residues 10 to 68 (RVTTRQIITVKVNDLDSFGQGVARHNGKALFIPGLLPEESAEVIITEDKKQFARARVSR) enclose the TRAM domain. Positions 81, 87, 90, and 161 each coordinate [4Fe-4S] cluster. Residues Gln264, Phe293, Asn298, Glu314, Asn341, and Asp362 each coordinate S-adenosyl-L-methionine. Cys388 (nucleophile) is an active-site residue.

Belongs to the class I-like SAM-binding methyltransferase superfamily. RNA M5U methyltransferase family. RlmD subfamily.

It carries out the reaction uridine(1939) in 23S rRNA + S-adenosyl-L-methionine = 5-methyluridine(1939) in 23S rRNA + S-adenosyl-L-homocysteine + H(+). In terms of biological role, catalyzes the formation of 5-methyl-uridine at position 1939 (m5U1939) in 23S rRNA. The chain is 23S rRNA (uracil(1939)-C(5))-methyltransferase RlmD from Salmonella paratyphi A (strain ATCC 9150 / SARB42).